Reading from the N-terminus, the 288-residue chain is Plasmodesmata-located protein 6 (288 aa).

Positions 1–22 (MFATKTVLFIAVVSLLGTFSSA) are cleaved as a signal peptide. At 23–256 (AVDTFIYGGC…NNDDDEIEKT (234 aa)) the chain is on the extracellular side. Gnk2-homologous domains are found at residues 25-132 (DTFI…NTTF) and 137-234 (DKTV…ARGG). 6 disulfides stabilise this stretch: Cys-32–Cys-110, Cys-84–Cys-95, Cys-98–Cys-123, Cys-145–Cys-212, Cys-188–Cys-197, and Cys-200–Cys-225. A helical transmembrane segment spans residues 257–277 (LAIIVGLIAGVTLLVVFLSFM). The segment at 257–277 (LAIIVGLIAGVTLLVVFLSFM) is necessary and sufficient for plasmodesmal targeting. Topologically, residues 278–288 (AKSCERGKGGK) are cytoplasmic.

Belongs to the cysteine-rich repeat secretory protein family. Plasmodesmata-located proteins (PDLD) subfamily. As to quaternary structure, (Microbial infection) Interacts with Grapevine fanleaf virus (GFLV) 2B-MP. In terms of tissue distribution, highly expressed in inflorescence silique (at mRNA level).

The protein resides in the cell membrane. The protein localises to the cell junction. It is found in the plasmodesma. Functionally, modulates cell-to-cell trafficking. In Arabidopsis thaliana (Mouse-ear cress), this protein is Plasmodesmata-located protein 6.